A 456-amino-acid polypeptide reads, in one-letter code: GTPase Der (456 aa).

2 EngA-type G domains span residues 4–169 (PIVA…PSKE) and 178–353 (IQLA…EQHR). GTP is bound by residues 10–17 (GRPNVGKS), 57–61 (DTGGL), 120–123 (NKCE), 184–191 (GRPNVGKS), 231–235 (DTAGI), and 296–299 (NKWD). Residues 354–439 (RRVSTSVVNE…PLKLFWRGKQ (86 aa)) form the KH-like domain.

It belongs to the TRAFAC class TrmE-Era-EngA-EngB-Septin-like GTPase superfamily. EngA (Der) GTPase family. In terms of assembly, associates with the 50S ribosomal subunit.

Its function is as follows. GTPase that plays an essential role in the late steps of ribosome biogenesis. The protein is GTPase Der of Prochlorococcus marinus (strain MIT 9211).